The following is a 221-amino-acid chain: Glutathione S-transferase class-mu 26 kDa isozyme 1 (221 aa).

Residues P2 to G82 form the GST N-terminal domain. Residues Y7–W8, W40–K44, N53–L54, and Q66–S67 contribute to the glutathione site. The region spanning T84–L202 is the GST C-terminal domain. Y110 lines the substrate pocket.

This sequence belongs to the GST superfamily. Mu family. As to quaternary structure, homodimer.

It carries out the reaction RX + glutathione = an S-substituted glutathione + a halide anion + H(+). Functionally, conjugation of reduced glutathione to a wide number of exogenous and endogenous hydrophobic electrophiles. In terms of biological role, GST isoenzymes appear to play a central role in the parasite detoxification system. Other functions are also suspected including a role in increasing the solubility of haematin in the parasite gut. This Fasciola hepatica (Liver fluke) protein is Glutathione S-transferase class-mu 26 kDa isozyme 1.